Reading from the N-terminus, the 558-residue chain is Protein OS-9 homolog (558 aa).

Residues 1–17 (MLLKSLALIASSSLAAT) form the signal peptide. Asn68 carries N-linked (GlcNAc...) asparagine glycosylation. An MRH domain is found at 111 to 237 (GDCLFYEQGF…QVGTPRLCKD (127 aa)). A disulfide bridge links Cys113 with Cys126. A mannooligosaccharide derivative contacts are provided by Gln133, Arg197, Glu219, and Tyr225. 2 cysteine pairs are disulfide-bonded: Cys190/Cys223 and Cys205/Cys235. 2 disordered regions span residues 435–508 (SKKL…DEDE) and 539–558 (KDLA…GLSD). Over residues 441-466 (KKEAASTKREEAKKQVEASVEEKAVD) the composition is skewed to basic and acidic residues. Residues 474–492 (DTVTSTQTFFRTQTLSTAE) are compositionally biased toward polar residues. The segment covering 543–558 (DKEDDDDDYEDYGLSD) has biased composition (acidic residues).

The protein belongs to the OS-9 family. As to quaternary structure, interacts with missfolded ER lumenal proteins.

Its subcellular location is the endoplasmic reticulum membrane. In terms of biological role, lectin involved in the quality control of the secretory pathway. As a member of the endoplasmic reticulum-associated degradation lumenal (ERAD-L) surveillance system, targets misfolded endoplasmic reticulum lumenal glycoproteins for degradation. This is Protein OS-9 homolog (YOS9) from Yarrowia lipolytica (strain CLIB 122 / E 150) (Yeast).